The sequence spans 308 residues: Transcription factor JunB (308 aa).

Residues 229–256 (RIKAERKRLRNRLAATKCRKRKLERISR) form a basic motif region. A bZIP domain is found at 229-292 (RIKAERKRLR…AQLKQKVLRH (64 aa)). The interval 257–285 (LEEKVKVLKNDNAGLSNTASVLRDQVAQL) is leucine-zipper.

This sequence belongs to the bZIP family. Jun subfamily. In terms of assembly, binds DNA as a homodimer or as a heterodimer with another member of the jun/fos family.

Its subcellular location is the nucleus. Its function is as follows. Transcription factor involved in regulating gene activity following the primary growth factor response. Binds to the DNA sequence 5'-TGA[CG]TCA-3'. The sequence is that of Transcription factor JunB (junb) from Cyprinus carpio (Common carp).